Here is a 278-residue protein sequence, read N- to C-terminus: UPF0758 protein BURPS1106A_0984 (278 aa).

Positions 1–64 are disordered; the sequence is MQYEIVSAGE…ATAAARRGRD (64 aa). The segment covering 22 to 59 has biased composition (low complexity); that stretch reads AAAPAAPSSAVPSSAALSSAALSSAAQPTGAPPATAAA. Positions 156 to 278 constitute an MPN domain; that stretch reads LVDSPGAVDD…TFSFAQAGWI (123 aa). 3 residues coordinate Zn(2+): His227, His229, and Asp240. Residues 227–240 carry the JAMM motif motif; sequence HNHPSGAVRPSAAD.

This sequence belongs to the UPF0758 family.

The chain is UPF0758 protein BURPS1106A_0984 from Burkholderia pseudomallei (strain 1106a).